The sequence spans 108 residues: ER membrane protein complex subunit 6 (108 aa).

The next 3 membrane-spanning stretches (helical) occupy residues 21–41 (VVSFVRNLTSSFFGCAAGILG), 45–65 (YEGLALYVLGYFFVSFLLFAL), and 86–106 (ILDGAPSYVLTWTLFYSLVYV).

The protein belongs to the EMC6 family.

It is found in the endoplasmic reticulum membrane. The polypeptide is ER membrane protein complex subunit 6 (Schizosaccharomyces pombe (strain 972 / ATCC 24843) (Fission yeast)).